Consider the following 188-residue polypeptide: Peptidyl-tRNA hydrolase (188 aa).

Phe15 provides a ligand contact to tRNA. His20 acts as the Proton acceptor in catalysis. Residues Tyr64, Asn66, and Asn112 each contribute to the tRNA site.

The protein belongs to the PTH family. As to quaternary structure, monomer.

The protein localises to the cytoplasm. The catalysed reaction is an N-acyl-L-alpha-aminoacyl-tRNA + H2O = an N-acyl-L-amino acid + a tRNA + H(+). Hydrolyzes ribosome-free peptidyl-tRNAs (with 1 or more amino acids incorporated), which drop off the ribosome during protein synthesis, or as a result of ribosome stalling. In terms of biological role, catalyzes the release of premature peptidyl moieties from peptidyl-tRNA molecules trapped in stalled 50S ribosomal subunits, and thus maintains levels of free tRNAs and 50S ribosomes. This is Peptidyl-tRNA hydrolase from Borrelia duttonii (strain Ly).